The following is an 868-amino-acid chain: DNA topoisomerase 1 (868 aa).

The 146-residue stretch at 3 to 148 (KSLVIVESPA…RFSRVVFNEI (146 aa)) folds into the Toprim domain. The Mg(2+) site is built by E9 and D117. The Topo IA-type catalytic domain occupies 164–581 (NMDRVNAQQT…QFFKDFSSQL (418 aa)). The interaction with DNA stretch occupies residues 198–203 (SAGRVQ). Y325 (O-(5'-phospho-DNA)-tyrosine intermediate) is an active-site residue. 3 C4-type zinc fingers span residues 605 to 636 (CPTC…KERC), 667 to 694 (CTKC…NPNC), and 716 to 739 (CDKC…CTNC).

The protein belongs to the type IA topoisomerase family. In terms of assembly, monomer. Mg(2+) is required as a cofactor.

It catalyses the reaction ATP-independent breakage of single-stranded DNA, followed by passage and rejoining.. Functionally, releases the supercoiling and torsional tension of DNA, which is introduced during the DNA replication and transcription, by transiently cleaving and rejoining one strand of the DNA duplex. Introduces a single-strand break via transesterification at a target site in duplex DNA. The scissile phosphodiester is attacked by the catalytic tyrosine of the enzyme, resulting in the formation of a DNA-(5'-phosphotyrosyl)-enzyme intermediate and the expulsion of a 3'-OH DNA strand. The free DNA strand then undergoes passage around the unbroken strand, thus removing DNA supercoils. Finally, in the religation step, the DNA 3'-OH attacks the covalent intermediate to expel the active-site tyrosine and restore the DNA phosphodiester backbone. In Haemophilus influenzae (strain ATCC 51907 / DSM 11121 / KW20 / Rd), this protein is DNA topoisomerase 1.